Consider the following 254-residue polypeptide: Ribosomal RNA small subunit methyltransferase G (254 aa).

The segment at 84–109 (NTESKTSLNNAETKNTNEALLTSEPF) is insert. Residues Gly115, Phe120, 171–172 (AE), and Arg185 contribute to the S-adenosyl-L-methionine site.

The protein belongs to the methyltransferase superfamily. RNA methyltransferase RsmG family.

The protein localises to the cytoplasm. In terms of biological role, specifically methylates the N7 position of a guanine in 16S rRNA. In Treponema denticola (strain ATCC 35405 / DSM 14222 / CIP 103919 / JCM 8153 / KCTC 15104), this protein is Ribosomal RNA small subunit methyltransferase G.